The sequence spans 217 residues: UPF0502 protein KPN78578_10500 (217 aa).

It belongs to the UPF0502 family.

This chain is UPF0502 protein KPN78578_10500, found in Klebsiella pneumoniae subsp. pneumoniae (strain ATCC 700721 / MGH 78578).